Consider the following 436-residue polypeptide: Glutamate-1-semialdehyde 2,1-aminomutase (436 aa).

The residue at position 269 (K269) is an N6-(pyridoxal phosphate)lysine.

Belongs to the class-III pyridoxal-phosphate-dependent aminotransferase family. HemL subfamily. In terms of assembly, homodimer. Pyridoxal 5'-phosphate is required as a cofactor.

It localises to the cytoplasm. It catalyses the reaction (S)-4-amino-5-oxopentanoate = 5-aminolevulinate. It functions in the pathway porphyrin-containing compound metabolism; protoporphyrin-IX biosynthesis; 5-aminolevulinate from L-glutamyl-tRNA(Glu): step 2/2. It participates in porphyrin-containing compound metabolism; chlorophyll biosynthesis. This is Glutamate-1-semialdehyde 2,1-aminomutase from Heliobacterium modesticaldum (strain ATCC 51547 / Ice1).